Consider the following 362-residue polypeptide: Red-sensitive opsin (362 aa).

The Extracellular segment spans residues 1–49 (MAAWEAAFAARRRHEEEDTTRDSVFTYTNSNNTRGPFEGPNYHIAPRWV). N-linked (GlcNAc...) asparagine glycosylation is present at Asn31. The helical transmembrane segment at 50-74 (YNLTSVWMIFVVAASVFTNGLVLVA) threads the bilayer. Residues 75–86 (TWKFKKLRHPLN) lie on the Cytoplasmic side of the membrane. A helical membrane pass occupies residues 87-112 (WILVNLAVADLGETVIASTISVINQI). Residues 113–126 (SGYFILGHPMCVVE) lie on the Extracellular side of the membrane. The cysteines at positions 123 and 200 are disulfide-linked. A helical membrane pass occupies residues 127–146 (GYTVSACGITALWSLAIISW). Residues 147–165 (ERWFVVCKPFGNIKFDGKL) lie on the Cytoplasmic side of the membrane. A helical membrane pass occupies residues 166–189 (AVAGILFSWLWSCAWTAPPIFGWS). At 190 to 215 (RYWPHGLKTSCGPDVFSGSSDPGVQS) the chain is on the extracellular side. A helical transmembrane segment spans residues 216–243 (YMVVLMVTCCFFPLAIIILCYLQVWLAI). Residues 244 to 265 (RAVAAQQKESESTQKAEKEVSR) lie on the Cytoplasmic side of the membrane. Residues 266–289 (MVVVMIVAYCFCWGPYTFFACFAA) traverse the membrane as a helical segment. Residues 290-297 (ANPGYAFH) are Extracellular-facing. A helical transmembrane segment spans residues 298–322 (PLAAALPAYFAKSATIYNPIIYVFM). Position 309 is an N6-(retinylidene)lysine (Lys309). The Cytoplasmic portion of the chain corresponds to 323-362 (NRQFRNCILQLFGKKVDDGSEVSTSRTEVSSVSNSSVSPA).

It belongs to the G-protein coupled receptor 1 family. Opsin subfamily. Phosphorylated on some or all of the serine and threonine residues present in the C-terminal region. The color pigments are found in the cone photoreceptor cells.

The protein resides in the membrane. In terms of biological role, visual pigments are the light-absorbing molecules that mediate vision. They consist of an apoprotein, opsin, covalently linked to cis-retinal. This is Red-sensitive opsin from Gallus gallus (Chicken).